We begin with the raw amino-acid sequence, 396 residues long: (S)-8-oxocitronellyl enol synthase ISY2 (396 aa).

NADP(+) contacts are provided by residues 38-40, 66-67, 84-85, 108-109, Q146, Y182, I209, and 216-218; these read TGL, RR, DV, TW, and SMM. The active site involves Y182.

The protein belongs to the short-chain dehydrogenases/reductases (SDR) family.

It catalyses the reaction (S)-8-oxocitronellyl enol + NADP(+) = (6E)-8-oxogeranial + NADPH + H(+). The enzyme catalyses (S)-8-oxocitronellyl enol + NAD(+) = (6E)-8-oxogeranial + NADH + H(+). In terms of biological role, iridoid synthase that catalyzes the first step in generation of the iridoid ring scaffold using the linear monoterpene (6E)-8-oxogeranial as substrate. Iridoids comprise a large family of distinctive bicyclic monoterpenes that possess a wide range of pharmacological activities, including anticancer, anti-inflammatory, antifungal and antibacterial activities. Catalyzes the conversion of the linear monoterpene (6E)-8-oxogeranial to (S)-8-oxocitronellyl enol, a precursor of nepetalactones, which are metabolites that are both insect-repellent and have euphoric effect in cats. The sequence is that of (S)-8-oxocitronellyl enol synthase ISY2 from Nepeta racemosa (Catmint).